Consider the following 477-residue polypeptide: UDP-N-acetylmuramate--L-alanine ligase (477 aa).

Gly-115–Thr-121 provides a ligand contact to ATP.

Belongs to the MurCDEF family.

The protein resides in the cytoplasm. The catalysed reaction is UDP-N-acetyl-alpha-D-muramate + L-alanine + ATP = UDP-N-acetyl-alpha-D-muramoyl-L-alanine + ADP + phosphate + H(+). Its pathway is cell wall biogenesis; peptidoglycan biosynthesis. Functionally, cell wall formation. This chain is UDP-N-acetylmuramate--L-alanine ligase, found in Gluconobacter oxydans (strain 621H) (Gluconobacter suboxydans).